The following is a 236-amino-acid chain: Lipoarabinomannan carrier protein LprG (236 aa).

The first 25 residues, 1–25 (MQTRPRFAVQSLFAILATAAALVAG), serve as a signal peptide directing secretion. The N-palmitoyl cysteine moiety is linked to residue Cys26. Cys26 is lipidated: S-diacylglycerol cysteine.

It belongs to the LppX/LprAFG lipoprotein family. Interacts with itself, Ag85A (MSMEG_6398), LppI (MSMEG_3851) and LppK (MSMEG_3904) in vivo.

The protein resides in the cell inner membrane. It localises to the secreted. It is found in the cell wall. Functionally, helps membrane protein MSMEG_3069/MSMEI_2992 (P55) transport triacylglycerides (TAG) across the inner cell membrane into the periplasm and probably ultimately to the outer membrane. Binds TAG in its hydrophobic cavity and transfers it between lipid bilayers. TAG probably regulates lipid metabolism and growth regulation and plays a structural role in the outer membrane. Also binds mannosides, lipoarabinomannan and lipomannan and various glycolipids in the same cavity. Required for MSMEG_3069/MSMEI_2992 export activity. Export of ethidium bromide by MSMEG_3069/MSMEI_2992 can be complemented by the equivalent operon from M.tuberculosis (lprG-Rv1410c). Involved in mycolylation. This Mycolicibacterium smegmatis (strain ATCC 700084 / mc(2)155) (Mycobacterium smegmatis) protein is Lipoarabinomannan carrier protein LprG.